A 164-amino-acid polypeptide reads, in one-letter code: Histone H3-like centromeric protein CENH3 (164 aa).

The span at 1–11 shows a compositional bias: basic residues; that stretch reads MARTKHPAVRK. Residues 1 to 71 are disordered; sequence MARTKHPAVR…QRKPHRFRPG (71 aa). The residue at position 5 (lysine 5) is an N6,N6,N6-trimethyllysine; alternate. Position 5 is an N6,N6-dimethyllysine; alternate (lysine 5). Lysine 5, lysine 19, and lysine 30 each carry N6-methyllysine; alternate. Residues 12–26 show a composition bias toward basic and acidic residues; sequence SKAEPKKKLQFERSP. Lysine 19 carries the N6-acetyllysine; alternate modification. At lysine 30 the chain carries N6,N6,N6-trimethyllysine; alternate. N6,N6-dimethyllysine; alternate is present on lysine 30. The segment covering 40–55 has biased composition (low complexity); the sequence is TSATTRSAAGTSASGT. The span at 60–69 shows a compositional bias: basic residues; the sequence is TKQRKPHRFR.

It belongs to the histone H3 family.

Its subcellular location is the chromosome. It is found in the centromere. The protein localises to the kinetochore. In terms of biological role, histone H3-like variant which exclusively replaces conventional H3 in the nucleosome core of centromeric chromatin at the inner plate of the kinetochore. Required for recruitment and assembly of kinetochore proteins, mitotic progression and chromosome segregation. This chain is Histone H3-like centromeric protein CENH3, found in Oryza sativa subsp. japonica (Rice).